The chain runs to 118 residues: Small ribosomal subunit protein uS10 (118 aa).

The residue at position 37 (S37) is a Phosphoserine.

This sequence belongs to the universal ribosomal protein uS10 family. Component of the small ribosomal subunit (SSU). Mature yeast ribosomes consist of a small (40S) and a large (60S) subunit. The 40S small subunit contains 1 molecule of ribosomal RNA (18S rRNA) and at least 33 different proteins. The large 60S subunit contains 3 rRNA molecules (25S, 5.8S and 5S rRNA) and at least 46 different proteins.

Its subcellular location is the cytoplasm. Its function is as follows. Component of the ribosome, a large ribonucleoprotein complex responsible for the synthesis of proteins in the cell. The small ribosomal subunit (SSU) binds messenger RNAs (mRNAs) and translates the encoded message by selecting cognate aminoacyl-transfer RNA (tRNA) molecules. The large subunit (LSU) contains the ribosomal catalytic site termed the peptidyl transferase center (PTC), which catalyzes the formation of peptide bonds, thereby polymerizing the amino acids delivered by tRNAs into a polypeptide chain. The nascent polypeptides leave the ribosome through a tunnel in the LSU and interact with protein factors that function in enzymatic processing, targeting, and the membrane insertion of nascent chains at the exit of the ribosomal tunnel. The polypeptide is Small ribosomal subunit protein uS10 (rps20) (Schizosaccharomyces pombe (strain 972 / ATCC 24843) (Fission yeast)).